The primary structure comprises 176 residues: Large ribosomal subunit protein uL5 (176 aa).

The protein belongs to the universal ribosomal protein uL5 family. In terms of assembly, part of the 50S ribosomal subunit; contacts the 5S rRNA and probably tRNA. Forms a bridge to the 30S subunit in the 70S ribosome.

In terms of biological role, this is one of the proteins that bind and probably mediate the attachment of the 5S RNA into the large ribosomal subunit, where it forms part of the central protuberance. In the 70S ribosome it contacts protein S13 of the 30S subunit (bridge B1b), connecting the 2 subunits; this bridge is implicated in subunit movement. May contact the P site tRNA; the 5S rRNA and some of its associated proteins might help stabilize positioning of ribosome-bound tRNAs. The polypeptide is Large ribosomal subunit protein uL5 (Picrophilus torridus (strain ATCC 700027 / DSM 9790 / JCM 10055 / NBRC 100828 / KAW 2/3)).